We begin with the raw amino-acid sequence, 258 residues long: Imidazole glycerol phosphate synthase subunit HisF (258 aa).

Catalysis depends on residues Asp11 and Asp130.

It belongs to the HisA/HisF family. As to quaternary structure, heterodimer of HisH and HisF.

Its subcellular location is the cytoplasm. It catalyses the reaction 5-[(5-phospho-1-deoxy-D-ribulos-1-ylimino)methylamino]-1-(5-phospho-beta-D-ribosyl)imidazole-4-carboxamide + L-glutamine = D-erythro-1-(imidazol-4-yl)glycerol 3-phosphate + 5-amino-1-(5-phospho-beta-D-ribosyl)imidazole-4-carboxamide + L-glutamate + H(+). It participates in amino-acid biosynthesis; L-histidine biosynthesis; L-histidine from 5-phospho-alpha-D-ribose 1-diphosphate: step 5/9. Its function is as follows. IGPS catalyzes the conversion of PRFAR and glutamine to IGP, AICAR and glutamate. The HisF subunit catalyzes the cyclization activity that produces IGP and AICAR from PRFAR using the ammonia provided by the HisH subunit. The polypeptide is Imidazole glycerol phosphate synthase subunit HisF (Rhodopseudomonas palustris (strain BisB18)).